A 598-amino-acid polypeptide reads, in one-letter code: MSVKNIRNFSIIAHIDHGKSTLADRIISECGAISDRQMSSQVMDTMDIEKERGITIKAQSVRLNYKFNNENFVLNLIDTPGHVDFSYEVSRSLASCEGALLVVDASQGVEAQTIANVYIALENNLEIIPVINKIDLPNADVEKVKHEIEHIIGIDCKDAICVSAKTGVGIKELIETIITKIPAPKTDDEAPTKALIYDSWFDNYLGALALVRIYEGSIAKNDEVLVMSTDKKHIVQDLFYPHPLSPIKTQSLQSGEVGVVVLGLKTVGDVQVGDTITLVKNKAKEAIGGFEKAKAFVFAGLYPIETDKFEDLRDALDKLKLNDSSITYEPETSLALGFGFRVGFLGLLHMEVIKERLEREFNLDLIATAPTVTYEIYQTDGELIKIQNPSELPPVNKIDHIKEPYVKATIITPSEFLGNLITLLNRKRGVQVKMDYITPERVLLEYDVPLNEIVMDFYDKLKSLTKGYASFDYEPIEFRVGDLVKLDIKVAGENVDALSIIVPNEKAQSKGRELVSAMKEIVPRQLFEVAIQASIGNKIIARETVKSMGKNVTAKCYGGDITRKRKLLEKQKEGKKRMKAIGKVNLPQEAFLSVLKID.

In terms of domain architecture, tr-type G spans lysine 4 to lysine 185. GTP is bound by residues aspartate 16–threonine 21 and asparagine 132–aspartate 135.

This sequence belongs to the TRAFAC class translation factor GTPase superfamily. Classic translation factor GTPase family. LepA subfamily.

The protein localises to the cell inner membrane. It catalyses the reaction GTP + H2O = GDP + phosphate + H(+). Required for accurate and efficient protein synthesis under certain stress conditions. May act as a fidelity factor of the translation reaction, by catalyzing a one-codon backward translocation of tRNAs on improperly translocated ribosomes. Back-translocation proceeds from a post-translocation (POST) complex to a pre-translocation (PRE) complex, thus giving elongation factor G a second chance to translocate the tRNAs correctly. Binds to ribosomes in a GTP-dependent manner. The polypeptide is Elongation factor 4 (Campylobacter jejuni subsp. jejuni serotype O:2 (strain ATCC 700819 / NCTC 11168)).